A 252-amino-acid chain; its full sequence is Hydroxyacylglutathione hydrolase (252 aa).

H54, H56, D58, H59, H111, D128, and H166 together coordinate Zn(2+).

The protein belongs to the metallo-beta-lactamase superfamily. Glyoxalase II family. Monomer. The cofactor is Zn(2+).

The enzyme catalyses an S-(2-hydroxyacyl)glutathione + H2O = a 2-hydroxy carboxylate + glutathione + H(+). It participates in secondary metabolite metabolism; methylglyoxal degradation; (R)-lactate from methylglyoxal: step 2/2. Its function is as follows. Thiolesterase that catalyzes the hydrolysis of S-D-lactoyl-glutathione to form glutathione and D-lactic acid. This Aliivibrio salmonicida (strain LFI1238) (Vibrio salmonicida (strain LFI1238)) protein is Hydroxyacylglutathione hydrolase.